Here is a 228-residue protein sequence, read N- to C-terminus: Ribosomal RNA small subunit methyltransferase G (228 aa).

S-adenosyl-L-methionine is bound by residues G89, L94, 140–141, and R159; that span reads VE.

It belongs to the methyltransferase superfamily. RNA methyltransferase RsmG family.

The protein localises to the cytoplasm. The catalysed reaction is guanosine(527) in 16S rRNA + S-adenosyl-L-methionine = N(7)-methylguanosine(527) in 16S rRNA + S-adenosyl-L-homocysteine. In terms of biological role, specifically methylates the N7 position of guanine in position 527 of 16S rRNA. This chain is Ribosomal RNA small subunit methyltransferase G, found in Burkholderia ambifaria (strain MC40-6).